The chain runs to 560 residues: Membrane protein insertase YidC (560 aa).

The next 6 membrane-spanning stretches (helical) occupy residues 7-27 (NLIAAIVLSLSIIFGWQYFVV), 334-354 (AIDFGWFYIITKPVFYAMNFF), 357-377 (YVGNFGISILIVTVIIKLLMF), 431-451 (LPILVQIPVFFSIYKVLYVTI), 476-496 (LFGFLPFSPPSFLMIGAWPIL), and 522-542 (FMPLIFLVMFSSFPVGLLIYW).

This sequence belongs to the OXA1/ALB3/YidC family. Type 1 subfamily. As to quaternary structure, interacts with the Sec translocase complex via SecD. Specifically interacts with transmembrane segments of nascent integral membrane proteins during membrane integration.

It localises to the cell inner membrane. Its function is as follows. Required for the insertion and/or proper folding and/or complex formation of integral membrane proteins into the membrane. Involved in integration of membrane proteins that insert both dependently and independently of the Sec translocase complex, as well as at least some lipoproteins. Aids folding of multispanning membrane proteins. This Rickettsia canadensis (strain McKiel) protein is Membrane protein insertase YidC.